The sequence spans 175 residues: Trafficking protein particle complex subunit 20 (175 aa).

Belongs to the TRAPP small subunits family. Sedlin subfamily. Part of the multisubunit TRAPP (transport protein particle) I complex composed of BET3, BET5, TRS20, TRS23, TRS31 and TRS33. Part of the multisubunit TRAPP (transport protein particle) II complex composed of BET3, BET5, TRS20, TRS23, TRS31, TRS33, TRS65, TRS85, TRS120 and TRS130. Part of the multisubunit TRAPP (transport protein particle) III complex composed of BET3, BET5, TRS20, TRS23, TRS31, TRS33 and TRS85.

The protein resides in the golgi apparatus. It is found in the cis-Golgi network. Its subcellular location is the endoplasmic reticulum. It localises to the preautophagosomal structure. Functionally, component of the TRAPP I, TRAPP II and TRAPP III complexes which act as guanine nucleotide exchange factors (GEF) for YPT1. TRAPP I plays a key role in the late stages of endoplasmic reticulum to Golgi traffic. TRAPP II plays a role in intra-Golgi transport. TRAPP III plays a role in autophagosome formation. The protein is Trafficking protein particle complex subunit 20 (TRS20) of Saccharomyces cerevisiae (strain ATCC 204508 / S288c) (Baker's yeast).